A 213-amino-acid chain; its full sequence is MNWLEERLPGIGKVAEDIAEHPVPSHTLNIFYCLGGLTLLAFLVQCVTGLFLALYYKPTPEAAFASVQMITNEVRFGATIRSLHHWAANLMILLVFLHMLRVYYTGSFKKPRELNWLAGCFLLVLSLGLAFTGYLLPYEQLSYWASVIGAETAGSLPVVGATMKIMMQGGIKVTAEMLSRFYVLHVMILPLVTIGFLVAHFIMIRVQGISDPM.

The chain crosses the membrane as a helical span at residues 30 to 50 (IFYCLGGLTLLAFLVQCVTGL). Cys-33 lines the heme c pocket. Heme b contacts are provided by His-84 and His-98. Transmembrane regions (helical) follow at residues 88–108 (ANLM…TGSF), 114–134 (LNWL…FTGY), and 184–204 (LHVM…FIMI). Residues His-185 and His-200 each coordinate heme b.

The protein belongs to the cytochrome b family. PetB subfamily. As to quaternary structure, the subunits of the cytochrome bc complex are a Rieske Fe-S protein (PetC), cytochrome b6 (PetB), subunit IV (PetD), and a diheme cytochrome c (PetX). Heme b is required as a cofactor. Heme c serves as cofactor.

It localises to the cell membrane. Functionally, component of the cytochrome bc complex which donates electrons to the photosynthetic reaction center. This chain is Cytochrome b6, found in Heliobacterium mobile (Heliobacillus mobilis).